A 136-amino-acid chain; its full sequence is Ribosome-binding factor A (136 aa).

It belongs to the RbfA family. As to quaternary structure, monomer. Binds 30S ribosomal subunits, but not 50S ribosomal subunits or 70S ribosomes.

The protein localises to the cytoplasm. Functionally, one of several proteins that assist in the late maturation steps of the functional core of the 30S ribosomal subunit. Associates with free 30S ribosomal subunits (but not with 30S subunits that are part of 70S ribosomes or polysomes). Required for efficient processing of 16S rRNA. May interact with the 5'-terminal helix region of 16S rRNA. The sequence is that of Ribosome-binding factor A from Yersinia pestis bv. Antiqua (strain Antiqua).